The sequence spans 507 residues: MVTIRADEISNIIRERIEQYNREVKIVNTGTVLQVGDGIARIYGLDEVMAGELVEFEEGTIGIALNLESNNVGVVLMGDGLMIQEGSSVKATGRIAQIPVSEAYLGRVINALAKPIDGRGEIYASESRLIESPAPGIISRRSVYEPLQTGLIAIDSMIPIGRGQRELIIGDRQTGKTAVATDTILNQQGQNVICVYVAIGQKASSVAQVVNTLQERGAMEYTIVVAETADSPATLQYLAPYTGAALAEYFMFRERHTLIIYDDLSKQAQAYRQMSLLLRRPPGREAYPGDVFYLHSRLLERAAKLSSLLGEGSMTALPIVETQSGDVSAYIPTNVISITDGQIFLSADLFNAGIRPAINVGISVSRVGSAAQIKAMKQVAGKLKLELAQFAELEAFAQFASDLDKATQNQLARGQRLRELLKQSQAAPLTVEEQIMTIYTGTNGYLDSLEIGQVRKFLVELRTYVKTNKPQFQEIISSTKTFTEEAEALLKEAIQEQKERFLLQEQG.

170 to 177 lines the ATP pocket; sequence GDRQTGKT.

This sequence belongs to the ATPase alpha/beta chains family. In terms of assembly, F-type ATPases have 2 components, CF(1) - the catalytic core - and CF(0) - the membrane proton channel. CF(1) has five subunits: alpha(3), beta(3), gamma(1), delta(1), epsilon(1). CF(0) has four main subunits: a, b, b' and c.

It localises to the plastid. The protein resides in the chloroplast thylakoid membrane. The catalysed reaction is ATP + H2O + 4 H(+)(in) = ADP + phosphate + 5 H(+)(out). Produces ATP from ADP in the presence of a proton gradient across the membrane. The alpha chain is a regulatory subunit. The polypeptide is ATP synthase subunit alpha, chloroplastic (Eucalyptus globulus subsp. globulus (Tasmanian blue gum)).